Consider the following 316-residue polypeptide: ATP synthase gamma chain (316 aa).

It belongs to the ATPase gamma chain family. In terms of assembly, F-type ATPases have 2 components, CF(1) - the catalytic core - and CF(0) - the membrane proton channel. CF(1) has five subunits: alpha(3), beta(3), gamma(1), delta(1), epsilon(1). CF(0) has three main subunits: a, b and c.

The protein localises to the cellular thylakoid membrane. Produces ATP from ADP in the presence of a proton gradient across the membrane. The gamma chain is believed to be important in regulating ATPase activity and the flow of protons through the CF(0) complex. In Prochlorococcus marinus (strain MIT 9303), this protein is ATP synthase gamma chain.